The following is a 353-amino-acid chain: UPF0283 membrane protein Spro_2618 (353 aa).

Helical transmembrane passes span 71 to 91 (MVTAGLTLFGVSVVAQGVQWV), 101 to 121 (IAMGGGVAGGLIVFAGVGSVV), and 214 to 234 (ESTLMIAVSPLAVVDMAFIAW).

Belongs to the UPF0283 family.

The protein localises to the cell inner membrane. This Serratia proteamaculans (strain 568) protein is UPF0283 membrane protein Spro_2618.